A 44-amino-acid chain; its full sequence is Photosystem I reaction center subunit IX 2 (44 aa).

The chain crosses the membrane as a helical span at residues 13-35; it reads APVLATLWLSSTAVILIGVNSYF.

It belongs to the PsaJ family.

The protein localises to the cellular thylakoid membrane. May help in the organization of the PsaE and PsaF subunits. The protein is Photosystem I reaction center subunit IX 2 (psaJ2) of Prochlorococcus marinus (strain NATL2A).